The primary structure comprises 91 residues: Small ribosomal subunit protein uS19 (91 aa).

This sequence belongs to the universal ribosomal protein uS19 family.

Functionally, protein S19 forms a complex with S13 that binds strongly to the 16S ribosomal RNA. This chain is Small ribosomal subunit protein uS19, found in Paraburkholderia phymatum (strain DSM 17167 / CIP 108236 / LMG 21445 / STM815) (Burkholderia phymatum).